The primary structure comprises 166 residues: Eukaryotic translation initiation factor 5A (166 aa).

The segment at 1-21 (MSDEDHDFSHQGGGDNASKTY) is disordered. Lysine 53 bears the Hypusine mark. The interval 101-121 (EDPSLPSHLSLMDDEGESRED) is disordered. Positions 112–121 (MDDEGESRED) are enriched in acidic residues.

Belongs to the eIF-5A family. Post-translationally, lys-53 undergoes hypusination, a unique post-translational modification that consists in the addition of a butylamino group from spermidine to lysine side chain, leading to the formation of the unusual amino acid hypusine. eIF-5As are the only known proteins to undergo this modification, which is essential for their function.

The protein localises to the cytoplasm. In terms of biological role, translation factor that promotes translation elongation and termination, particularly upon ribosome stalling at specific amino acid sequence contexts. Binds between the exit (E) and peptidyl (P) site of the ribosome and promotes rescue of stalled ribosome: specifically required for efficient translation of polyproline-containing peptides as well as other motifs that stall the ribosome. Acts as a ribosome quality control (RQC) cofactor by joining the RQC complex to facilitate peptidyl transfer during CAT tailing step. This is Eukaryotic translation initiation factor 5A from Leishmania donovani.